A 253-amino-acid polypeptide reads, in one-letter code: CD151 antigen (253 aa).

The Cytoplasmic segment spans residues 1–18 (MGEFNEKKTTCGTVCLKY). 2 S-palmitoyl cysteine lipidation sites follow: Cys11 and Cys15. Residues 19–39 (LLFTYNCCFWLAGLAVMAVGI) form a helical membrane-spanning segment. The Extracellular segment spans residues 40–57 (WTLALKSDYISLLASGTY). Residues 58–78 (LATAYILVVAGTVVMVTGVLG) form a helical membrane-spanning segment. The Cytoplasmic segment spans residues 79 to 91 (CCATFKERRNLLR). A helical membrane pass occupies residues 92–112 (LYFILLLIIFLLEIIAGILAY). At 113–221 (AYYQQLNTEL…LETFIQEHLR (109 aa)) the chain is on the extracellular side. Asn159 is a glycosylation site (N-linked (GlcNAc...) asparagine). A helical transmembrane segment spans residues 222–242 (VIGAVGIGIACVQVFGMIFTC). Residues Cys242 and Cys243 are each lipidated (S-palmitoyl cysteine). Over 243–253 (CLYRSLKLEHY) the chain is Cytoplasmic.

The protein belongs to the tetraspanin (TM4SF) family. As to quaternary structure, interacts with integrins ITGA3:ITGB1, ITGA5:ITGB1, ITGA3:ITGB1 and ITGA6:ITGB4 and with CD9 and CD181. Interacts (via the second extracellular domain) with integrin ITGAV:ITGB3. Interacts with ITGA3; this interaction modulates ITGA3 glycosylation pattern. Interacts with F11R. Interacts with RAC1 and CDC42; these interactions mediate physical association of RAC1 and CDC42 with integrin adhesion receptor complexes. Palmitoylated. Palmitoylation by ZDHHC2 regulates CD151 expression, association with other tetraspanin family proteins and function in cell adhesion. In terms of processing, ubiquitinated by RNF128 on lysine residues present in the tetraspanin amino terminus via 'Lys-48'-linked ubiquitin leading to proteasomal degradation. As to expression, expressed in a variety of tissues including vascular endothelium and epidermis. Expressed on erythroid cells, with a higher level of expression in erythroid precursors than on mature erythrocytes. Acts as a sensitive T-cell activation marker.

It is found in the cell membrane. In terms of biological role, structural component of specialized membrane microdomains known as tetraspanin-enriched microdomains (TERMs), which act as platforms for receptor clustering and signaling. Plays a role in various cellular and molecular mechanism through its association with both integrin and non-integrin proteins. These interactions facilitate critical cellular functions, including cell-to-cell communication, wound healing, platelet aggregation, trafficking, cell motility, and angiogenesis. Via interaction with JAM-A/F11R and integrin ITGA3:ITGB1, promotes the recruitment of signaling molecules such as RAC1, CDC42 and RhoGTPases to facilitate the polarization of epithelial cells and the reorganization of the actin cytoskeleton, which are critical steps in cell migration process. Regulates the glycosylation pattern of ITGA3:ITGB1 thereby modulating its activity. Plays an essential role in the maintenance of central laminin-binding integrin ITGA6:ITGB4-containing adhesion complexes. Essential for the proper assembly of the glomerular and tubular basement membranes in kidney. Contributes to T-cell activation by modulating integrin signaling leading to activation of downstream targets PTK2 and MAPK1/MAPK3. Functionally, (Microbial infection) Plays a role in human papillomavirus 16/HPV-16 endocytosis upon binding to cell surface receptor. Its function is as follows. (Microbial infection) Plays a role in human cytomegalovirus entry into host cell by contributing to entry receptor binding, membrane fusion, or release of the capsid. This is CD151 antigen (CD151) from Homo sapiens (Human).